Reading from the N-terminus, the 605-residue chain is Podocalyxin-like protein 2 (605 aa).

An N-terminal signal peptide occupies residues M1–A32. Residues G33–T500 lie on the Extracellular side of the membrane. O-linked (Xyl...) (chondroitin sulfate) serine glycosylation is present at S79. Y97 and Y118 each carry sulfotyrosine. Positions S129–S134 are O-glycosylated at one site. The interval S129–S347 is disordered. An O-linked (GalNAc...) serine glycan is attached at S144. The segment covering E162–L189 has biased composition (acidic residues). The N-linked (GlcNAc...) asparagine glycan is linked to N193. The segment covering S207–A217 has biased composition (polar residues). Composition is skewed to low complexity over residues P241–P255 and E288–G298. N-linked (GlcNAc...) asparagine glycosylation occurs at N395. Residues L501–L521 traverse the membrane as a helical segment. The Cytoplasmic portion of the chain corresponds to Y522–L605. Residues L554–L605 are disordered. A Phosphoserine modification is found at S570. Residues N572 to S582 are compositionally biased toward gly residues. Acidic residues predominate over residues E594–L605. S596 is modified (phosphoserine).

It belongs to the podocalyxin family. In terms of assembly, homodimer; disulfide-linked. Interacts with SELL, SELE and SELP. In terms of processing, O-glycosylated; contains chondroitin sulfate. Displays sialylated O-linked oligosaccharides. Post-translationally, sulfation is necessary for interaction with SELL. Sialylated O-linked oligosaccharides are necessary for interaction with SELL, SELE and SELP. Expressed in T-cells, B-cells and monocytes. Expression is higher on memory and germinal center cells than on naive B-cells (at protein level). Highly expressed in brain. Moderately expressed in pancreas, kidney and lymphoid node. Weakly expressed in liver. Detected in both endothelial cells and CD34+ bone marrow cells.

Its subcellular location is the membrane. In terms of biological role, acts as a ligand for vascular selectins. Mediates rapid rolling of leukocytes over vascular surfaces through high affinity divalent cation-dependent interactions with E-, P- and L-selectins. This chain is Podocalyxin-like protein 2 (PODXL2), found in Homo sapiens (Human).